Reading from the N-terminus, the 506-residue chain is Anaerobic nitric oxide reductase transcription regulator NorR (506 aa).

Asp57 bears the 4-aspartylphosphate mark. A Sigma-54 factor interaction domain is found at 187 to 416; it reads MIGLSPAMTQ…LEHAIHRAVV (230 aa). Residues 215–222 and 278–287 contribute to the ATP site; these read GETGTGKE and ADNGTLFLDE. Residues 481–500 constitute a DNA-binding region (H-T-H motif); the sequence is WAASARALETDVANLHRLAK.

Its pathway is nitrogen metabolism; nitric oxide reduction. Functionally, required for the expression of anaerobic nitric oxide (NO) reductase, acts as a transcriptional activator for at least the norVW operon. Activation also requires sigma-54. This Salmonella dublin (strain CT_02021853) protein is Anaerobic nitric oxide reductase transcription regulator NorR.